The following is a 153-amino-acid chain: Ribosome maturation factor RimP (153 aa).

Belongs to the RimP family.

The protein resides in the cytoplasm. Required for maturation of 30S ribosomal subunits. The chain is Ribosome maturation factor RimP from Pelotomaculum thermopropionicum (strain DSM 13744 / JCM 10971 / SI).